The primary structure comprises 561 residues: DNA ligase B (561 aa).

Catalysis depends on Lys-125, which acts as the N6-AMP-lysine intermediate.

The protein belongs to the NAD-dependent DNA ligase family. LigB subfamily.

The catalysed reaction is NAD(+) + (deoxyribonucleotide)n-3'-hydroxyl + 5'-phospho-(deoxyribonucleotide)m = (deoxyribonucleotide)n+m + AMP + beta-nicotinamide D-nucleotide.. Functionally, catalyzes the formation of phosphodiester linkages between 5'-phosphoryl and 3'-hydroxyl groups in double-stranded DNA using NAD as a coenzyme and as the energy source for the reaction. The sequence is that of DNA ligase B from Salmonella gallinarum (strain 287/91 / NCTC 13346).